The chain runs to 215 residues: ATP-dependent Clp protease proteolytic subunit 3 (215 aa).

Residue Ser-119 is the Nucleophile of the active site. Residue His-144 is part of the active site.

This sequence belongs to the peptidase S14 family. As to quaternary structure, fourteen ClpP subunits assemble into 2 heptameric rings which stack back to back to give a disk-like structure with a central cavity, resembling the structure of eukaryotic proteasomes.

Its subcellular location is the cytoplasm. It carries out the reaction Hydrolysis of proteins to small peptides in the presence of ATP and magnesium. alpha-casein is the usual test substrate. In the absence of ATP, only oligopeptides shorter than five residues are hydrolyzed (such as succinyl-Leu-Tyr-|-NHMec, and Leu-Tyr-Leu-|-Tyr-Trp, in which cleavage of the -Tyr-|-Leu- and -Tyr-|-Trp bonds also occurs).. In terms of biological role, cleaves peptides in various proteins in a process that requires ATP hydrolysis. Has a chymotrypsin-like activity. Plays a major role in the degradation of misfolded proteins. This chain is ATP-dependent Clp protease proteolytic subunit 3, found in Prochlorococcus marinus subsp. pastoris (strain CCMP1986 / NIES-2087 / MED4).